Reading from the N-terminus, the 624-residue chain is ATP-dependent zinc metalloprotease FtsH (624 aa).

Residues 1 to 7 (MPRAPFS) lie on the Cytoplasmic side of the membrane. A helical membrane pass occupies residues 8-28 (LLALVLGLAFLAWAFSLAGTV). Residues 29 to 103 (GAPSGTVNYT…VRVEPPQGQN (75 aa)) lie on the Periplasmic side of the membrane. The chain crosses the membrane as a helical span at residues 104 to 124 (ALGFLWPLLLVGLLIGALYYF). Over 125–624 (SRNGRAGPSD…VKPGGALGGA (500 aa)) the chain is Cytoplasmic. ATP-binding positions include Ala159, 199–203 (GVGKT), and His204. Position 418 (His418) interacts with Zn(2+). Glu419 is an active-site residue. The Zn(2+) site is built by His422 and Asp493. The disordered stretch occupies residues 595–624 (PLEAPEEAREEREPPRVVPKVKPGGALGGA). A compositionally biased stretch (basic and acidic residues) spans 600–609 (EEAREEREPP).

This sequence in the central section; belongs to the AAA ATPase family. It in the C-terminal section; belongs to the peptidase M41 family. As to quaternary structure, the isolated soluble domain (residues 126-624) forms a stable hexamer in which the AAA+ domains (residues 126-400) are alternatively open or closed. Requires Zn(2+) as cofactor.

The protein localises to the cell inner membrane. The proteolytic activity is dependent on ATP, both the ATPase and protease activities are inhibited by ADP. In terms of biological role, acts as a processive, ATP-dependent zinc metallopeptidase for both cytoplasmic and membrane proteins. Plays a role in the quality control of integral membrane proteins. Degrades preferentially unfolded substrates in a processive, ATP-dependent manner, usually after hydrophobic residues. The polypeptide is ATP-dependent zinc metalloprotease FtsH (Thermus thermophilus (strain ATCC 27634 / DSM 579 / HB8)).